Reading from the N-terminus, the 410-residue chain is Auxin-induced protein 5NG4 (410 aa).

Over 1–16 the chain is Cytoplasmic; that stretch reads MASNIMQRCNVFMSER. Residues 17-37 traverse the membrane as a helical segment; it reads VKLHAAMLALQFGYAGFHIVS. Residues 38–47 lie on the Extracellular side of the membrane; that stretch reads RAALNMGVSK. A helical transmembrane segment spans residues 48 to 68; the sequence is VVFPVYRNILALMLIGPCAYF. At 69–74 the chain is on the cytoplasmic side; the sequence is LEKKER. Residues 75–95 traverse the membrane as a helical segment; it reads PALTLSFLIQFFLLALCGITG. At 96–109 the chain is on the extracellular side; the sequence is QSRILSLRIVLHIP. Residues 110-130 form a helical membrane-spanning segment; that stretch reads TFASAIQNSVPAITFIMAAAL. Topologically, residues 131–141 are cytoplasmic; that stretch reads RLEKVHISRRD. The helical transmembrane segment at 142-162 threads the bilayer; that stretch reads GLAKIIGTVACVSGATIITLY. The Extracellular segment spans residues 163–196; sequence KGPPITHIWRPNLEVTASYFKAFQGNDLSAKSEN. N-linked (GlcNAc...) asparagine glycosylation occurs at Asn-196. Residues 197 to 217 form a helical membrane-spanning segment; sequence WTLGCIYLLGNCLAWSGWIVL. Positions 209–338 constitute an EamA domain; the sequence is LAWSGWIVLQ…IIIGLYLVLW (130 aa). At 218–229 the chain is on the cytoplasmic side; sequence QAPVLKRYPARL. Residues 230–250 form a helical membrane-spanning segment; it reads SVTSFTCFFGVIQFLIIAAFF. Topologically, residues 251–264 are extracellular; that stretch reads ETDLEHWKIHSGGE. A helical membrane pass occupies residues 265–285; it reads LFTILYAGFVASGIAFSVQIW. The Cytoplasmic segment spans residues 286–292; that stretch reads CIDRGGP. A helical transmembrane segment spans residues 293 to 313; that stretch reads VFVAVYQPVQTIAVAIMASII. The Extracellular segment spans residues 314–317; sequence LGEQ. The helical transmembrane segment at 318–338 threads the bilayer; it reads FYLGGIFGAILIIIGLYLVLW. The Cytoplasmic segment spans residues 339 to 410; it reads GKSEEKRLGL…IPSPSDEPQP (72 aa).

The protein belongs to the drug/metabolite transporter (DMT) superfamily. Plant drug/metabolite exporter (P-DME) (TC 2.A.7.4) family.

It localises to the membrane. This Pinus taeda (Loblolly pine) protein is Auxin-induced protein 5NG4.